Consider the following 32-residue polypeptide: Ribulose bisphosphate carboxylase/oxygenase activase, chloroplastic (32 aa).

A disordered region spans residues 13 to 32 (FGALREGPPTFEQPAMTIEK).

Belongs to the RuBisCO activase family.

It localises to the plastid. The protein resides in the chloroplast stroma. In terms of biological role, activation of RuBisCO (ribulose-1,5-bisphosphate carboxylase/oxygenase; EC 4.1.1.39) involves the ATP-dependent carboxylation of the epsilon-amino group of lysine leading to a carbamate structure. This chain is Ribulose bisphosphate carboxylase/oxygenase activase, chloroplastic, found in Populus euphratica (Euphrates poplar).